A 158-amino-acid chain; its full sequence is SsrA-binding protein (158 aa).

It belongs to the SmpB family.

It localises to the cytoplasm. Required for rescue of stalled ribosomes mediated by trans-translation. Binds to transfer-messenger RNA (tmRNA), required for stable association of tmRNA with ribosomes. tmRNA and SmpB together mimic tRNA shape, replacing the anticodon stem-loop with SmpB. tmRNA is encoded by the ssrA gene; the 2 termini fold to resemble tRNA(Ala) and it encodes a 'tag peptide', a short internal open reading frame. During trans-translation Ala-aminoacylated tmRNA acts like a tRNA, entering the A-site of stalled ribosomes, displacing the stalled mRNA. The ribosome then switches to translate the ORF on the tmRNA; the nascent peptide is terminated with the 'tag peptide' encoded by the tmRNA and targeted for degradation. The ribosome is freed to recommence translation, which seems to be the essential function of trans-translation. The protein is SsrA-binding protein of Caldicellulosiruptor saccharolyticus (strain ATCC 43494 / DSM 8903 / Tp8T 6331).